The sequence spans 142 residues: Small ribosomal subunit protein bS6 (142 aa).

The interval 103-142 is disordered; that stretch reads KAAESREQRAPRGEDRPARVVADDVDDSDDDTDDEDSNDE. Residues 105–124 are compositionally biased toward basic and acidic residues; it reads AESREQRAPRGEDRPARVVA. The segment covering 125-142 has biased composition (acidic residues); that stretch reads DDVDDSDDDTDDEDSNDE.

Belongs to the bacterial ribosomal protein bS6 family.

Its function is as follows. Binds together with bS18 to 16S ribosomal RNA. This Hahella chejuensis (strain KCTC 2396) protein is Small ribosomal subunit protein bS6.